The primary structure comprises 362 residues: MVLKEIPTENITRPLGRNEVIGLLFRLTIFGAVTYFTIKWMVDAIDPTRKQKVEAQKQAEKLMRQIGVQNVKLSEYEMSIAAHLVDPLTMQITWHDIAGLDEVITELKDTVILPIQKRHLFEGSRLLQPPKGVLLYGPPGCGKTLIAKATAKEAGFRFINLQPSTLTDKWYGESQKLAAAVFSLAIKLQPSIIFIDEIDSFLRNRSSSDHEATAMMKAQFMSLWDGLDTDYNCQVIIMGATNRPQDLDSAILRRMPTRFHINQPNVRQRKDILKLILENENVESAVELSEIAKQTDGFSGSDLREMCRDAALLCVRDFVHQESPEEDFIRPIRQEDLQRAIEKMKKSKSAGVHEAFMQVPLD.

The Mitochondrial intermembrane portion of the chain corresponds to 1 to 19; it reads MVLKEIPTENITRPLGRNE. Residues 20–42 form a helical membrane-spanning segment; that stretch reads VIGLLFRLTIFGAVTYFTIKWMV. The Cytoplasmic segment spans residues 43-362; sequence DAIDPTRKQK…HEAFMQVPLD (320 aa). 137 to 144 is an ATP binding site; the sequence is GPPGCGKT.

Belongs to the AAA ATPase family. MSP1 subfamily.

It localises to the mitochondrion outer membrane. Its subcellular location is the peroxisome membrane. It is found in the postsynaptic cell membrane. It catalyses the reaction [protein]-with a C-terminal TM segment(out) + ATP + H2O = [protein]-with a C-terminal TM segment(in) + ADP + phosphate + H(+). Its function is as follows. Outer mitochondrial translocase required to remove mislocalized tail-anchored transmembrane proteins on mitochondria. Specifically recognizes and binds tail-anchored transmembrane proteins: acts as a dislocase that mediates the ATP-dependent extraction of mistargeted tail-anchored transmembrane proteins from the mitochondrion outer membrane. Also plays a critical role in regulating the surface expression of AMPA receptors (AMPAR), thereby regulating synaptic plasticity and learning and memory. This is Outer mitochondrial transmembrane helix translocase from Danio rerio (Zebrafish).